The primary structure comprises 196 residues: Nucleoid occlusion factor SlmA (196 aa).

The HTH tetR-type domain maps to 7 to 68; it reads TNRREEILQA…GLIEFIEEAL (62 aa). Residues 31–50 constitute a DNA-binding region (H-T-H motif); sequence TTAKLAKQVGVSEAALYRHF. The stretch at 110–142 forms a coiled coil; it reads HALMFENERLRDRINQLFERIETQLRQILRERK.

The protein belongs to the nucleoid occlusion factor SlmA family. In terms of assembly, homodimer. Interacts with FtsZ.

Its subcellular location is the cytoplasm. It localises to the nucleoid. Its function is as follows. Required for nucleoid occlusion (NO) phenomenon, which prevents Z-ring formation and cell division over the nucleoid. Acts as a DNA-associated cell division inhibitor that binds simultaneously chromosomal DNA and FtsZ, and disrupts the assembly of FtsZ polymers. SlmA-DNA-binding sequences (SBS) are dispersed on non-Ter regions of the chromosome, preventing FtsZ polymerization at these regions. This chain is Nucleoid occlusion factor SlmA, found in Vibrio campbellii (strain ATCC BAA-1116).